The chain runs to 1279 residues: ATP-dependent helicase/nuclease subunit A (1279 aa).

The UvrD-like helicase ATP-binding domain occupies 4-499 (TKWTDEQRQA…VKLFKNFRSR (496 aa)). 25-32 (AGAGAGKT) serves as a coordination point for ATP. Positions 526–853 (EEALKVGASY…RIMSIHKSKG (328 aa)) constitute a UvrD-like helicase C-terminal domain.

Belongs to the helicase family. AddA subfamily. Heterodimer of AddA and AddB/RexB. Mg(2+) is required as a cofactor.

It catalyses the reaction Couples ATP hydrolysis with the unwinding of duplex DNA by translocating in the 3'-5' direction.. It carries out the reaction ATP + H2O = ADP + phosphate + H(+). Its function is as follows. The heterodimer acts as both an ATP-dependent DNA helicase and an ATP-dependent, dual-direction single-stranded exonuclease. Recognizes the chi site generating a DNA molecule suitable for the initiation of homologous recombination. The AddA nuclease domain is required for chi fragment generation; this subunit has the helicase and 3' -&gt; 5' nuclease activities. This chain is ATP-dependent helicase/nuclease subunit A, found in Clostridium botulinum (strain Okra / Type B1).